The chain runs to 97 residues: Co-chaperonin GroES (97 aa).

Belongs to the GroES chaperonin family. Heptamer of 7 subunits arranged in a ring. Interacts with the chaperonin GroEL.

The protein resides in the cytoplasm. Functionally, together with the chaperonin GroEL, plays an essential role in assisting protein folding. The GroEL-GroES system forms a nano-cage that allows encapsulation of the non-native substrate proteins and provides a physical environment optimized to promote and accelerate protein folding. GroES binds to the apical surface of the GroEL ring, thereby capping the opening of the GroEL channel. The protein is Co-chaperonin GroES of Aeromonas salmonicida.